Reading from the N-terminus, the 337-residue chain is Inositol 2-dehydrogenase (337 aa).

This sequence belongs to the Gfo/Idh/MocA family. Homotetramer.

It carries out the reaction myo-inositol + NAD(+) = scyllo-inosose + NADH + H(+). Involved in the oxidation of myo-inositol (MI) to 2-keto-myo-inositol (2KMI or 2-inosose). This is Inositol 2-dehydrogenase from Klebsiella pneumoniae subsp. pneumoniae (strain ATCC 700721 / MGH 78578).